The primary structure comprises 77 residues: Exodeoxyribonuclease 7 small subunit (77 aa).

Belongs to the XseB family. In terms of assembly, heterooligomer composed of large and small subunits.

It is found in the cytoplasm. The enzyme catalyses Exonucleolytic cleavage in either 5'- to 3'- or 3'- to 5'-direction to yield nucleoside 5'-phosphates.. Bidirectionally degrades single-stranded DNA into large acid-insoluble oligonucleotides, which are then degraded further into small acid-soluble oligonucleotides. This is Exodeoxyribonuclease 7 small subunit from Lysinibacillus sphaericus (strain C3-41).